Reading from the N-terminus, the 269-residue chain is 5'-methylthioadenosine/S-adenosylhomocysteine nucleosidase (269 aa).

The active-site Proton acceptor is the glutamate 12. Residues glycine 77, valine 174, and 194-195 (ME) each bind substrate. Catalysis depends on aspartate 218, which acts as the Proton donor.

This sequence belongs to the PNP/UDP phosphorylase family. MtnN subfamily.

The enzyme catalyses S-adenosyl-L-homocysteine + H2O = S-(5-deoxy-D-ribos-5-yl)-L-homocysteine + adenine. It catalyses the reaction S-methyl-5'-thioadenosine + H2O = 5-(methylsulfanyl)-D-ribose + adenine. The catalysed reaction is 5'-deoxyadenosine + H2O = 5-deoxy-D-ribose + adenine. It participates in amino-acid biosynthesis; L-methionine biosynthesis via salvage pathway; S-methyl-5-thio-alpha-D-ribose 1-phosphate from S-methyl-5'-thioadenosine (hydrolase route): step 1/2. Catalyzes the irreversible cleavage of the glycosidic bond in both 5'-methylthioadenosine (MTA) and S-adenosylhomocysteine (SAH/AdoHcy) to adenine and the corresponding thioribose, 5'-methylthioribose and S-ribosylhomocysteine, respectively. Also cleaves 5'-deoxyadenosine, a toxic by-product of radical S-adenosylmethionine (SAM) enzymes, into 5-deoxyribose and adenine. The sequence is that of 5'-methylthioadenosine/S-adenosylhomocysteine nucleosidase (mtnN) from Treponema pallidum (strain Nichols).